The sequence spans 316 residues: Transaldolase A (316 aa).

The Schiff-base intermediate with substrate role is filled by Lys-131.

The protein belongs to the transaldolase family. Type 1 subfamily. As to quaternary structure, homodimer.

Its subcellular location is the cytoplasm. The catalysed reaction is D-sedoheptulose 7-phosphate + D-glyceraldehyde 3-phosphate = D-erythrose 4-phosphate + beta-D-fructose 6-phosphate. It functions in the pathway carbohydrate degradation; pentose phosphate pathway; D-glyceraldehyde 3-phosphate and beta-D-fructose 6-phosphate from D-ribose 5-phosphate and D-xylulose 5-phosphate (non-oxidative stage): step 2/3. Its function is as follows. Transaldolase is important for the balance of metabolites in the pentose-phosphate pathway. This Salmonella typhimurium (strain LT2 / SGSC1412 / ATCC 700720) protein is Transaldolase A.